The chain runs to 402 residues: MMMHPMNKTNKRDKMEKRNNPSALNIFMSFLKLGMVAFGGPTAIAYVREMVVDEKKWMDEKSFNNGVALAQIIPGASVMQVAAYVGFYLRGIVGAFAAFMAYALPAFLIMLFLTIIYMHVKSLPKTVSIFEALRIIVVSLAANGTLNFSKKNIRTIGDVFLLLISALLFILKFSPFIVIFVSIFIGFLMYRRDITKLSLKIDIPREKLRIYKYVAYLLFGVFLFNLILYMIDSKLFLLSTLMMKVDVFAFGGGYGSVPFMLHEVVDKYNLMDAKTFMDGIALGQITPGPIVITATFVGYIVGGFIGSIISTISVFTPSFIILLSSIPIFDSLKHNTIFKNILHMILVSFVGLLVAVTIRFALLVDWSIQALIIFIVSFLLLYKKYNMLLVVLLSLVLGYLIL.

The next 12 helical transmembrane spans lie at 26-46, 67-87, 96-116, 126-146, 168-188, 213-233, 235-255, 289-309, 312-332, 338-358, 360-380, and 381-401; these read IFMSFLKLGMVAFGGPTAIAY, VALAQIIPGASVMQVAAYVGF, FAAFMAYALPAFLIMLFLTII, TVSIFEALRIIVVSLAANGTL, LFILKFSPFIVIFVSIFIGFL, YVAYLLFGVFLFNLILYMIDS, LFLLSTLMMKVDVFAFGGGYG, PIVITATFVGYIVGGFIGSII, ISVFTPSFIILLSSIPIFDSL, FKNILHMILVSFVGLLVAVTI, FALLVDWSIQALIIFIVSFLL, and LYKKYNMLLVVLLSLVLGYLI.

The protein belongs to the chromate ion transporter (CHR) (TC 2.A.51) family.

It is found in the cell membrane. This is an uncharacterized protein from Methanocaldococcus jannaschii (strain ATCC 43067 / DSM 2661 / JAL-1 / JCM 10045 / NBRC 100440) (Methanococcus jannaschii).